A 316-amino-acid polypeptide reads, in one-letter code: Methionyl-tRNA formyltransferase (316 aa).

112 to 115 (SLLP) provides a ligand contact to (6S)-5,6,7,8-tetrahydrofolate.

The protein belongs to the Fmt family.

The enzyme catalyses L-methionyl-tRNA(fMet) + (6R)-10-formyltetrahydrofolate = N-formyl-L-methionyl-tRNA(fMet) + (6S)-5,6,7,8-tetrahydrofolate + H(+). Its function is as follows. Attaches a formyl group to the free amino group of methionyl-tRNA(fMet). The formyl group appears to play a dual role in the initiator identity of N-formylmethionyl-tRNA by promoting its recognition by IF2 and preventing the misappropriation of this tRNA by the elongation apparatus. This chain is Methionyl-tRNA formyltransferase, found in Glaesserella parasuis serovar 5 (strain SH0165) (Haemophilus parasuis).